A 572-amino-acid chain; its full sequence is Probable inactive glycosyltransferase 25 family member 3 (572 aa).

N-linked (GlcNAc...) asparagine glycosylation is found at asparagine 52, asparagine 130, asparagine 214, and asparagine 337. Positions 569-572 (RDEL) match the Prevents secretion from ER motif.

This sequence belongs to the glycosyltransferase 25 family.

The protein resides in the endoplasmic reticulum lumen. Probable cell adhesion protein involved in leukocyte transmigration across the blood-brain barrier. Does not express any beta-galactosyltransferase activity in vitro. This chain is Probable inactive glycosyltransferase 25 family member 3 (Cercam), found in Rattus norvegicus (Rat).